Reading from the N-terminus, the 564-residue chain is Eukaryotic translation initiation factor 3 subunit L (564 aa).

Serine 2 carries the post-translational modification N-acetylserine. A PCI domain is found at 331-537; the sequence is DAIRVFANIL…IHIADTKVAR (207 aa). N6-acetyllysine occurs at positions 465 and 549.

It belongs to the eIF-3 subunit L family. In terms of assembly, component of the eukaryotic translation initiation factor 3 (eIF-3) complex, which is composed of 13 subunits: EIF3A, EIF3B, EIF3C, EIF3D, EIF3E, EIF3F, EIF3G, EIF3H, EIF3I, EIF3J, EIF3K, EIF3L and EIF3M. The eIF-3 complex appears to include 3 stable modules: module A is composed of EIF3A, EIF3B, EIF3G and EIF3I; module B is composed of EIF3F, EIF3H, and EIF3M; and module C is composed of EIF3C, EIF3D, EIF3E, EIF3K and EIF3L. EIF3C of module C binds EIF3B of module A and EIF3H of module B, thereby linking the three modules. EIF3J is a labile subunit that binds to the eIF-3 complex via EIF3B. The eIF-3 complex interacts with RPS6KB1 under conditions of nutrient depletion. Mitogenic stimulation leads to binding and activation of a complex composed of MTOR and RPTOR, leading to phosphorylation and release of RPS6KB1 and binding of EIF4B to eIF-3. Interacts with RRN3.

It is found in the cytoplasm. Functionally, component of the eukaryotic translation initiation factor 3 (eIF-3) complex, which is required for several steps in the initiation of protein synthesis. The eIF-3 complex associates with the 40S ribosome and facilitates the recruitment of eIF-1, eIF-1A, eIF-2:GTP:methionyl-tRNAi and eIF-5 to form the 43S pre-initiation complex (43S PIC). The eIF-3 complex stimulates mRNA recruitment to the 43S PIC and scanning of the mRNA for AUG recognition. The eIF-3 complex is also required for disassembly and recycling of post-termination ribosomal complexes and subsequently prevents premature joining of the 40S and 60S ribosomal subunits prior to initiation. The eIF-3 complex specifically targets and initiates translation of a subset of mRNAs involved in cell proliferation, including cell cycling, differentiation and apoptosis, and uses different modes of RNA stem-loop binding to exert either translational activation or repression. This chain is Eukaryotic translation initiation factor 3 subunit L, found in Bos taurus (Bovine).